A 382-amino-acid chain; its full sequence is MLDGLKMEENFQSAIETSASFSSLLGRAVSPKSVCEGCQRVISDRFLLRLNDSFWHEQCVQCASCKEPLETTCFYRDKKLYCKYHYEKLFAVKCGGCFEAIAPNEFVMRAQKSVYHLSCFCCCVCERQLQKGDEFVLKEGQLLCKGDYEKERELLSLVSPAASDSGKSDDEESLCKSAHGAGKGASEDGKDHKRPKRPRTILTTQQRRAFKASFEVSSKPCRKVRETLAAETGLSVRVVQVWFQNQRAKMKKLARRQQQQQQDQQNTQRLTSAQTNGSGNAGMEGIMNPYTTLPTPQQLLAIEQSVYNSDPFRQGLTPPQMPGDHMHPYGAEPLFHDLDSDDTSLSNLGDCFLATSEAGPLQSRVGNPIDHLYSMQNSYFTS.

LIM zinc-binding domains lie at 33 to 92 (SVCE…LFAV) and 92 to 154 (VKCG…EREL). 2 disordered regions span residues 161–208 (AASD…QQRR) and 252–286 (KLAR…MEGI). The homeobox DNA-binding region spans 195 to 254 (PKRPRTILTTQQRRAFKASFEVSSKPCRKVRETLAAETGLSVRVVQVWFQNQRAKMKKLA). Residues 256-269 (RQQQQQQDQQNTQR) are compositionally biased toward low complexity.

Its subcellular location is the nucleus. Its function is as follows. Acts as a transcriptional activator by binding to an A/T-rich sequence, the FLAT element, in the insulin gene promoter. Required for development of the roof plate and, in turn, for specification of dorsal cell fates in the CNS and developing vertebrae. The sequence is that of LIM homeobox transcription factor 1-alpha (Lmx1a) from Mus musculus (Mouse).